The sequence spans 841 residues: Taste receptor type 1 member 1 (841 aa).

The N-terminal stretch at 1-20 (MLLCTARLVGLQLLISCCWA) is a signal peptide. Residues 21-567 (FACHSTESSP…VFLALREHTS (547 aa)) are Extracellular-facing. N87, N88, N95, N291, N479, and N529 each carry an N-linked (GlcNAc...) asparagine glycan. The helical transmembrane segment at 568-588 (WVLLAANTLLLLLLLGTAGLF) threads the bilayer. Over 589–603 (AWHLDTPVVRSAGGR) the chain is Cytoplasmic. The helical transmembrane segment at 604-624 (LCFLMLGSLAAGSGSLYGFFG) threads the bilayer. Residues 625 to 639 (EPTRPACLLRQALFA) are Extracellular-facing. The helical transmembrane segment at 640-660 (LGFTIFLSCLTVRSFQLIIIF) threads the bilayer. The Cytoplasmic portion of the chain corresponds to 661–680 (KFSTKVPTFYHAWVQNHGAG). The chain crosses the membrane as a helical span at residues 681–701 (LFVMISSAAQLLICLTWLVVW). Residues 702 to 725 (TPLPAREYQRFPHLVMLECTETNS) are Extracellular-facing. A helical transmembrane segment spans residues 726-746 (LGFILAFLYNGLLSISAFACS). Residues 747–761 (YLGKDLPENYNEAKC) are Cytoplasmic-facing. Residues 762-782 (VTFSLLFNFVSWIAFFTTASV) traverse the membrane as a helical segment. The Extracellular portion of the chain corresponds to 783–795 (YDGKYLPAANMMA). Residues 796–816 (GLSSLSSGFGGYFLPKCYVIL) traverse the membrane as a helical segment. Residues 817–841 (CRPDLNSTEHFQASIQDYTRRCGST) are Cytoplasmic-facing.

The protein belongs to the G-protein coupled receptor 3 family. TAS1R subfamily. In terms of assembly, forms heterodimers with TAS1R3.

It is found in the cell membrane. Putative taste receptor. TAS1R1/TAS1R3 responds to the umami taste stimulus (the taste of monosodium glutamate). Sequence differences within and between species can significantly influence the selectivity and specificity of taste responses. The chain is Taste receptor type 1 member 1 (TAS1R1) from Homo sapiens (Human).